The following is a 465-amino-acid chain: Calcitonin gene-related peptide type 1 receptor (465 aa).

Residues 1 to 17 (MVICLLLCTPTDIFVVA) form the signal peptide. Residues 18–141 (SPEVNETQEY…HTNEGRMTAM (124 aa)) are Extracellular-facing. N-linked (GlcNAc...) asparagine glycosylation is found at N22, N68, N120, and N125. 3 disulfides stabilise this stretch: C50–C76, C67–C107, and C90–C129. The chain crosses the membrane as a helical span at residues 142–166 (NLFYLALIGHGLSLTSLLISLGIFF). Residues 167 to 177 (YFKSLSCQRIT) lie on the Cytoplasmic side of the membrane. Residues 178–200 (LHKNLFFSFVLNSVITIIWLTAV) traverse the membrane as a helical segment. Residues 201 to 211 (ANNQELVQRNP) lie on the Extracellular side of the membrane. A helical membrane pass occupies residues 212–240 (TSCKVSQFIHLYLFGCNYFWMLCEGIYLH). Residues 241–254 (TLIVVAVFAEKQHL) are Cytoplasmic-facing. Residues 255–275 (MWYYLLGWGFPLIPASIHAIA) form a helical membrane-spanning segment. At 276–291 (RSYYYNDNCWISSNTS) the chain is on the extracellular side. Residue N289 is glycosylated (N-linked (GlcNAc...) asparagine). A helical membrane pass occupies residues 292–316 (LLYIIHGPICAALLVNLFFLLNIVR). The Cytoplasmic segment spans residues 317–331 (VLITKLKVTHQAESS). The helical transmembrane segment at 332-353 (LYMKAVRATLILVPLLGIQYVL) threads the bilayer. The Extracellular segment spans residues 354-368 (LPYKPEGRVSSEIYD). The helical transmembrane segment at 369-389 (YIMHILMHYQGLLVATIFCFF) threads the bilayer. The Cytoplasmic segment spans residues 390 to 465 (NGEVQGVLRR…SILKSENPFT (76 aa)).

The protein belongs to the G-protein coupled receptor 2 family.

It localises to the cell membrane. Functionally, may function as G protein-coupled receptor for calcitonin-gene-related peptides and adrenomedullin. Specificity may be modulated by accessory proteins. May activate cAMP-dependent pathway. In Oncorhynchus gorbuscha (Pink salmon), this protein is Calcitonin gene-related peptide type 1 receptor (calcrl).